The primary structure comprises 71 residues: Large ribosomal subunit protein bL28 (71 aa).

The protein belongs to the bacterial ribosomal protein bL28 family.

The chain is Large ribosomal subunit protein bL28 from Finegoldia magna (strain ATCC 29328 / DSM 20472 / WAL 2508) (Peptostreptococcus magnus).